The sequence spans 2564 residues: Spectrin beta chain, non-erythrocytic 4 (2564 aa).

The disordered stretch occupies residues 1-37; that stretch reads MAQVPGEVDNMEGLPAPNNNPAARWESPDRGWEREQP. The interval 1 to 282 is actin-binding; the sequence is MAQVPGEVDN…IITYVVSFYH (282 aa). Positions 26-36 are enriched in basic and acidic residues; that stretch reads ESPDRGWEREQ. 2 consecutive Calponin-homology (CH) domains span residues 61–165 and 180–285; these read AVQK…LRFQ and RSAK…HYFS. 14 Spectrin repeats span residues 311 to 418, 430 to 533, 536 to 641, 774 to 879, 884 to 982, 1089 to 1196, 1306 to 1407, 1412 to 1512, 1515 to 1617, 1623 to 1725, 1728 to 1830, 1835 to 1935, 1944 to 2046, and 2049 to 2123; these read IERY…AALR, LAQR…RLEQ, ALQK…AELE, ALHQ…WLRD, YRMF…RKEE, RLQR…EALV, ELQH…RQLF, ADQL…RLLL, KELH…QQVL, VEQY…ALEQ, WLYQ…AQLL, ELHK…EDAR, ALRF…WLQQ, and EVHQ…QSKQ. The disordered stretch occupies residues 1853 to 1872; sequence KRRRLPRLTTPPEPRPSASS. The span at 2208–2225 shows a compositional bias: low complexity; that stretch reads PAAPEDAAETPATPAAAE. 2 disordered regions span residues 2208 to 2439 and 2533 to 2564; these read PAAP…KSSN and ARWGQTLPTTSSTDEGNPKREGGDRRASGRRK. Composition is skewed to basic and acidic residues over residues 2227–2254, 2268–2278, and 2287–2318; these read VRPRPERQESADRAEELPRRRRPERQES, ERQESAEHEAA, and EQMERRRERRERRLERQESSEQEMPIRGDLVK. The span at 2343-2355 shows a compositional bias: pro residues; sequence PSLPQPRELPPGR. 2 stretches are compositionally biased toward basic and acidic residues: residues 2362–2377 and 2424–2435; these read LPERTPRPDRPRARDR and FLLRKRELDANR. Positions 2418 to 2527 constitute a PH domain; sequence TVQHEGFLLR…WLEAVASSVA (110 aa). Polar residues predominate over residues 2538–2547; that stretch reads TLPTTSSTDE. Residues 2548–2564 show a composition bias toward basic and acidic residues; it reads GNPKREGGDRRASGRRK.

Belongs to the spectrin family. As to expression, expressed in skeletal muscle at the sarcolemma and in the muscle capillaries (at protein level). Abundantly expressed in brain and pancreatic islets.

The protein localises to the cytoplasm. The protein resides in the cytoskeleton. It is found in the cell cortex. This is Spectrin beta chain, non-erythrocytic 4 (SPTBN4) from Homo sapiens (Human).